We begin with the raw amino-acid sequence, 331 residues long: Probable transcriptional regulatory protein At2g25830 (331 aa).

It belongs to the TACO1 family.

The sequence is that of Probable transcriptional regulatory protein At2g25830 from Arabidopsis thaliana (Mouse-ear cress).